The primary structure comprises 179 residues: Putative 5'(3')-deoxyribonucleotidase (179 aa).

Asp9 acts as the Nucleophile in catalysis. Mg(2+) contacts are provided by Asp9, Asp11, and Asp135. Catalysis depends on Asp11, which acts as the Proton donor.

This sequence belongs to the 5'(3')-deoxyribonucleotidase family. It depends on Mg(2+) as a cofactor.

Its function is as follows. Dephosphorylates the 5' and 2'(3')-phosphates of deoxyribonucleotides. This chain is Putative 5'(3')-deoxyribonucleotidase, found in Staphylococcus epidermidis (strain ATCC 35984 / DSM 28319 / BCRC 17069 / CCUG 31568 / BM 3577 / RP62A).